The primary structure comprises 651 residues: UvrABC system protein C (651 aa).

In terms of domain architecture, GIY-YIG spans 20–97 (ERCGVYRMFD…IKKFQPKFNI (78 aa)). The region spanning 207–242 (KALQENLSKKMEELSSQMRFEEAAEIRDRIKALSYV) is the UVR domain.

Belongs to the UvrC family. As to quaternary structure, interacts with UvrB in an incision complex.

The protein resides in the cytoplasm. Its function is as follows. The UvrABC repair system catalyzes the recognition and processing of DNA lesions. UvrC both incises the 5' and 3' sides of the lesion. The N-terminal half is responsible for the 3' incision and the C-terminal half is responsible for the 5' incision. In Rickettsia akari (strain Hartford), this protein is UvrABC system protein C.